Reading from the N-terminus, the 294-residue chain is G-protein coupled receptor homolog U51 (294 aa).

Over 1–14 (MKNIDLTNWKLLAE) the chain is Extracellular. Residues 15–35 (IYEYLFFFSFFFLCLLVIIVV) form a helical membrane-spanning segment. Residues 36–47 (KFNNSTVGREYT) are Cytoplasmic-facing. The chain crosses the membrane as a helical span at residues 48-68 (FSTFSGMLVYILLLPVKMGML). The Extracellular segment spans residues 69 to 79 (TKMWDVSTDYC). The helical transmembrane segment at 80–102 (IILMFLSDFSFIFSSWALTLLAL) threads the bilayer. At 103-119 (ERINNFSFSEIKVNETK) the chain is on the cytoplasmic side. Residues 120–140 (ILKQMSFPIIWVTSIFQAVQI) traverse the membrane as a helical segment. The Extracellular segment spans residues 141–166 (SMKYKKSQMNLEDDYCLLAIERSAEE). Residues 167–187 (AWILLMYTVVIPTFIVFFYVL) form a helical membrane-spanning segment. Over 188-200 (NKRFLFLERDLNS) the chain is Cytoplasmic. The chain crosses the membrane as a helical span at residues 201–221 (IVTHLSLFLFFGALCFFPASV). Residues 222-236 (LNEFNCNRLFYGLHE) lie on the Extracellular side of the membrane. A helical membrane pass occupies residues 237–257 (LLIVCLELKIFYVPTMTYIIS). At 258–294 (CENYRLAAKAFFCKCFKPCFLMPSLRKLQQPTKSTQF) the chain is on the cytoplasmic side.

The protein belongs to the G-protein coupled receptor 1 family.

It localises to the host cell membrane. This is G-protein coupled receptor homolog U51 (U51) from Human herpesvirus 7 (strain JI) (HHV-7).